The following is a 91-amino-acid chain: Large ribosomal subunit protein uL22 (91 aa).

Belongs to the universal ribosomal protein uL22 family. In terms of assembly, part of the 50S ribosomal subunit.

This protein binds specifically to 23S rRNA; its binding is stimulated by other ribosomal proteins, e.g. L4, L17, and L20. It is important during the early stages of 50S assembly. It makes multiple contacts with different domains of the 23S rRNA in the assembled 50S subunit and ribosome. In terms of biological role, the globular domain of the protein is located near the polypeptide exit tunnel on the outside of the subunit, while an extended beta-hairpin is found that lines the wall of the exit tunnel in the center of the 70S ribosome. This chain is Large ribosomal subunit protein uL22 (rplV), found in Pigeon pea witches'-broom phytoplasma.